A 471-amino-acid chain; its full sequence is Extracellular endo-alpha-(1-&gt;5)-L-arabinanase (471 aa).

An N-terminal signal peptide occupies residues 1–19; that stretch reads MRFLFLMITLTALTGYILA. Asp32 (proton acceptor) is an active-site residue. Substrate is bound by residues Asp32, Gly117, 167-170, 187-189, and 219-223; these read NALD, SWF, and HSSME. The active-site Proton donor is the Glu223. His314 provides a ligand contact to Ca(2+).

It belongs to the glycosyl hydrolase 43 family. In terms of assembly, monomer. The cofactor is Ca(2+).

It is found in the secreted. The enzyme catalyses Endohydrolysis of (1-&gt;5)-alpha-arabinofuranosidic linkages in (1-&gt;5)-arabinans.. It participates in glycan metabolism; L-arabinan degradation. In terms of biological role, involved in the degradation of arabinan and is a key enzyme in the complete degradation of the plant cell wall. Catalyzes the internal cleavage of alpha-(1-&gt;5)-L-arabinofuranosyl residues in different arabinan-containing polysaccharides, and releases arabinotriose and arabinobiose as end products. It acts on branched arabinan (from sugar beet), but more slowly when compared to linear or debranched arabinan. The chain is Extracellular endo-alpha-(1-&gt;5)-L-arabinanase from Thermotoga petrophila (strain ATCC BAA-488 / DSM 13995 / JCM 10881 / RKU-1).